The primary structure comprises 622 residues: Palmitoyltransferase ZDHHC13 (622 aa).

Residue Met1 is modified to N-acetylmethionine. The Cytoplasmic segment spans residues 1 to 291; sequence MEGPGLGSQC…RLWRWLQKCE (291 aa). ANK repeat units lie at residues 43-78, 81-110, 115-144, 148-177, 181-211, 216-245, and 249-277; these read PLIE…VRQP, ENVS…VVDQ, LNST…DPTL, EGFS…SVNM, NGQT…SLNV, HQNT…SLDI, and KGET…KMRA. Residues 292–312 form a helical membrane-spanning segment; sequence LFLLLMLSVITMWAIGYILDF. Over 313 to 320 the chain is Lumenal; that stretch reads NSDSWLLK. A helical transmembrane segment spans residues 321 to 341; it reads GCLLVTLFFLTSLFPRFLVGY. Residues 342-347 are Cytoplasmic-facing; sequence KNLVYL. A helical membrane pass occupies residues 348 to 368; that stretch reads PTAFLLSSVFWIFMTWFILFF. Residues 369-370 are Lumenal-facing; it reads PD. Residues 371–391 traverse the membrane as a helical segment; the sequence is LAGAPFYFSFIFSIVAFLYFF. The Cytoplasmic segment spans residues 392–470; the sequence is YKTWATDPGF…RCIGFGNHHY (79 aa). Positions 426-476 constitute a DHHC domain; sequence TFCTSCLIRKPLRSLHCHVCNCCVARYDQHCLWTGRCIGFGNHHYYIFFLF. The S-palmitoyl cysteine intermediate role is filled by Cys456. A helical membrane pass occupies residues 471–491; sequence YIFFLFFLSMVCGWIIYGSFI. The Lumenal portion of the chain corresponds to 492–518; the sequence is YLSSHCATTFKEDGLWTYLNQIVACSP. A helical membrane pass occupies residues 519–539; it reads WVLYILMLATFHFSWSTFLLL. Residues 540 to 622 lie on the Cytoplasmic side of the membrane; it reads NQLFQIAFLG…PAREKVLRSV (83 aa).

This sequence belongs to the DHHC palmitoyltransferase family. AKR/ZDHHC17 subfamily. As to quaternary structure, interacts (via ANK repeats) with CLIP3. Interacts (via ANK repeats) with DNAJC5 (via C-terminus). Interacts (via ANK repeats) with HTT. Interacts (via ANK repeats) with MAP6. Interacts (via ANK repeats) with SNAP23. Interacts (via ANK repeats) with SNAP25. May interact (via ANK repeats) with SPRED2.

The protein resides in the golgi apparatus membrane. It is found in the cytoplasmic vesicle membrane. It carries out the reaction L-cysteinyl-[protein] + hexadecanoyl-CoA = S-hexadecanoyl-L-cysteinyl-[protein] + CoA. Its function is as follows. Palmitoyltransferase that could catalyze the addition of palmitate onto various protein substrates. Palmitoyltransferase for HTT and GAD2. May play a role in Mg(2+) transport. The protein is Palmitoyltransferase ZDHHC13 of Homo sapiens (Human).